A 122-amino-acid chain; its full sequence is Large ribosomal subunit protein uL14 (122 aa).

Belongs to the universal ribosomal protein uL14 family. Part of the 50S ribosomal subunit. Forms a cluster with proteins L3 and L19. In the 70S ribosome, L14 and L19 interact and together make contacts with the 16S rRNA in bridges B5 and B8.

Functionally, binds to 23S rRNA. Forms part of two intersubunit bridges in the 70S ribosome. The sequence is that of Large ribosomal subunit protein uL14 from Natranaerobius thermophilus (strain ATCC BAA-1301 / DSM 18059 / JW/NM-WN-LF).